Consider the following 742-residue polypeptide: Glucosylceramidase (742 aa).

Residues N37 and N160 are each glycosylated (N-linked (GlcNAc...) asparagine). E258 functions as the Proton donor in the catalytic mechanism. N-linked (GlcNAc...) asparagine glycosylation is present at N388. E492 serves as the catalytic Nucleophile. 3 N-linked (GlcNAc...) asparagine glycosylation sites follow: N552, N560, and N698. Residues 701–721 form a helical membrane-spanning segment; it reads IAQILVAVVILLLGVLVAYYA.

This sequence belongs to the glycosyl hydrolase 5 (cellulase A) family.

The protein localises to the membrane. The enzyme catalyses a beta-D-glucosyl-(1&lt;-&gt;1')-N-acylsphing-4-enine + H2O = an N-acylsphing-4-enine + D-glucose. In terms of biological role, specifically hydrolyzes the glucosidic linkage in glucosylceramide. May prevent accumulation of aberrent glucosylceramide containing immature ceramide. This is Glucosylceramidase from Cryptococcus neoformans var. grubii serotype A (strain H99 / ATCC 208821 / CBS 10515 / FGSC 9487) (Filobasidiella neoformans var. grubii).